Consider the following 368-residue polypeptide: C-X-C chemokine receptor type 3 (368 aa).

Over 1–53 (MVLEVSDHQVLNDAEVAALLENFSSSYDYGENESDSCCTSPPCPQDFSLNFDR) the chain is Extracellular. The N-linked (GlcNAc...) asparagine glycan is linked to asparagine 22. 2 positions are modified to sulfotyrosine: tyrosine 27 and tyrosine 29. An N-linked (GlcNAc...) asparagine glycan is attached at asparagine 32. Residues 54–80 (AFLPALYSLLFLLGLLGNGAVAAVLLS) traverse the membrane as a helical segment. Residues 81-89 (RRTALSSTD) are Cytoplasmic-facing. Residues 90-110 (TFLLHLAVADTLLVLTLPLWA) form a helical membrane-spanning segment. Residues 111–125 (VDAAVQWVFGSGLCK) are Extracellular-facing. A disulfide bond links cysteine 124 and cysteine 203. Residues 126 to 147 (VAGALFNINFYAGALLLACISF) traverse the membrane as a helical segment. Residues 148–169 (DRYLNIVHATQLYRRGPPARVT) lie on the Cytoplasmic side of the membrane. Residues 170 to 189 (LTCLAVWGLCLLFALPDFIF) traverse the membrane as a helical segment. The Extracellular portion of the chain corresponds to 190–212 (LSAHHDERLNATHCQYNFPQVGR). A helical membrane pass occupies residues 213–233 (TALRVLQLVAGFLLPLLVMAY). The Cytoplasmic segment spans residues 234–255 (CYAHILAVLLVSRGQRRLRAMR). A helical transmembrane segment spans residues 256-277 (LVVVVVVAFALCWTPYHLVVLV). The Extracellular segment spans residues 278-298 (DILMDLGALARNCGRESRVDV). The chain crosses the membrane as a helical span at residues 299–321 (AKSVTSGLGYMHCCLNPLLYAFV). Residues 322-368 (GVKFRERMWMLLLRLGCPNQRGLQRQPSSSRRDSSWSETSEASYSGL) lie on the Cytoplasmic side of the membrane. The tract at residues 342–368 (RGLQRQPSSSRRDSSWSETSEASYSGL) is disordered. The span at 357-368 (WSETSEASYSGL) shows a compositional bias: low complexity.

It belongs to the G-protein coupled receptor 1 family. In terms of assembly, homomer. Forms heteromers with ACKR4. As to quaternary structure, interacts with PF4/CXCL4. Post-translationally, sulfation on Tyr-27 and Tyr-29 is essential for CXCL10 binding and subsequent signal transduction induction. In terms of processing, N-glycosylated. As to expression, isoform 1 and isoform 2 are mainly expressed in heart, kidney, liver and skeletal muscle. Isoform 1 is also expressed in placenta. Isoform 2 is expressed in endothelial cells. Expressed in T-cells (at protein level).

It is found in the cell membrane. Functionally, receptor for the C-X-C chemokine CXCL9, CXCL10 and CXCL11 and mediates the proliferation, survival and angiogenic activity of human mesangial cells (HMC) through a heterotrimeric G-protein signaling pathway. Binds to CCL21. Probably promotes cell chemotaxis response. Upon activation by PF4, induces activated T-lymphocytes migration mediated via downstream Ras/extracellular signal-regulated kinase (ERK) signaling. Its function is as follows. Receptor for the C-X-C chemokine CXCL4 and also mediates the inhibitory activities of CXCL9, CXCL10 and CXCL11 on the proliferation, survival and angiogenic activity of human microvascular endothelial cells (HMVEC) through a cAMP-mediated signaling pathway. Does not promote cell chemotaxis respons. Interaction with CXCL4 or CXCL10 leads to activation of the p38MAPK pathway and contributes to inhibition of angiogenesis. Overexpression in renal cancer cells down-regulates expression of the anti-apoptotic protein HMOX1 and promotes apoptosis. Mediates the activity of CXCL11. In Homo sapiens (Human), this protein is C-X-C chemokine receptor type 3 (CXCR3).